The primary structure comprises 235 residues: Large ribosomal subunit protein uL1 (235 aa).

Belongs to the universal ribosomal protein uL1 family. Part of the 50S ribosomal subunit.

Binds directly to 23S rRNA. The L1 stalk is quite mobile in the ribosome, and is involved in E site tRNA release. Its function is as follows. Protein L1 is also a translational repressor protein, it controls the translation of the L11 operon by binding to its mRNA. This is Large ribosomal subunit protein uL1 from Parasynechococcus marenigrum (strain WH8102).